A 308-amino-acid polypeptide reads, in one-letter code: Glucan 1,3-beta-glucosidase BGL2 (308 aa).

An N-terminal signal peptide occupies residues 1–18 (MQIKFLTTLATVLTSVAA). Glu-119 acts as the Proton donor in catalysis. N-linked (GlcNAc...) asparagine glycosylation is present at Asn-197. Residue Glu-228 is the Nucleophile of the active site.

Belongs to the glycosyl hydrolase 17 family.

Its subcellular location is the secreted. It is found in the cell wall. It localises to the cytoplasm. The catalysed reaction is Successive hydrolysis of beta-D-glucose units from the non-reducing ends of (1-&gt;3)-beta-D-glucans, releasing alpha-glucose.. In terms of biological role, cell wall glucan 1,3-beta-glucosidase involved in cell wall biosynthesis and virulence. Crucial for delivery of beta-1,3-glucan to the biofilm matrix and for accumulation of mature matrix biomass. Plays a role as a major antigen in human systemic candidiasis patients. In Candida albicans (strain SC5314 / ATCC MYA-2876) (Yeast), this protein is Glucan 1,3-beta-glucosidase BGL2 (BGL2).